Consider the following 305-residue polypeptide: GMP synthase [glutamine-hydrolyzing] subunit B (305 aa).

The region spanning Val-2–Arg-184 is the GMPS ATP-PPase domain. Ser-29–Ser-35 lines the ATP pocket.

Heterodimer composed of a glutamine amidotransferase subunit (A) and a GMP-binding subunit (B).

It carries out the reaction XMP + L-glutamine + ATP + H2O = GMP + L-glutamate + AMP + diphosphate + 2 H(+). It participates in purine metabolism; GMP biosynthesis; GMP from XMP (L-Gln route): step 1/1. Functionally, catalyzes the synthesis of GMP from XMP. This is GMP synthase [glutamine-hydrolyzing] subunit B from Methanocella arvoryzae (strain DSM 22066 / NBRC 105507 / MRE50).